Consider the following 452-residue polypeptide: MQRRIMGIETEFGVTCTFHGHRRLSPDEVARYLFRRVVSWGRSSNVFLRNGARLYLDVGSHPEYATAECDSLVQLVTHDRAGEWVLEDLLVDAEQRLADEGIGGDIYLFKNNTDSAGNSYGCHENYLIVRAGEFSRISDVLLPFLVTRQLICGAGKVLQTPKAATYCLSQRAEHIWEGVSSATTRSRPIINTRDEPHADAEKYRRLHVIVGDSNMSETTTMLKVGTAALVLEMIESGVAFRDFSLDNPIRAIREVSHDVTGRRPVRLAGGRQASALDIQREYYTRAVEHLQTREPNAQIEQVVDLWGRQLDAVESQDFAKVDTEIDWVIKRKLFQRYQDRYDMELSHPKIAQLDLAYHDIKRGRGIFDLLQRKGLAARVTTDEEIAEAVDQPPQTTRARLRGEFISAAQEAGRDFTVDWVHLKLNDQAQRTVLCKDPFRAVDERVKRLIASM.

Mg(2+) is bound at residue Glu-9. Arg-53 provides a ligand contact to ATP. Tyr-55 is a Mg(2+) binding site. Asp-57 (proton acceptor) is an active-site residue. Glu-63 contributes to the Mg(2+) binding site. 2 residues coordinate ATP: Thr-66 and Trp-419.

Belongs to the Pup ligase/Pup deamidase family. Pup-conjugating enzyme subfamily.

It carries out the reaction ATP + [prokaryotic ubiquitin-like protein]-L-glutamate + [protein]-L-lysine = ADP + phosphate + N(6)-([prokaryotic ubiquitin-like protein]-gamma-L-glutamyl)-[protein]-L-lysine.. It participates in protein degradation; proteasomal Pup-dependent pathway. The protein operates within protein modification; protein pupylation. Its function is as follows. Catalyzes the covalent attachment of the prokaryotic ubiquitin-like protein modifier Pup to the proteasomal substrate proteins, thereby targeting them for proteasomal degradation. This tagging system is termed pupylation. The ligation reaction involves the side-chain carboxylate of the C-terminal glutamate of Pup and the side-chain amino group of a substrate lysine. This Mycobacterium tuberculosis (strain KZN 1435 / MDR) protein is Pup--protein ligase.